Consider the following 160-residue polypeptide: Large ribosomal subunit protein uL22c (160 aa).

Belongs to the universal ribosomal protein uL22 family. Part of the 50S ribosomal subunit.

The protein localises to the plastid. Its subcellular location is the chloroplast. Its function is as follows. This protein binds specifically to 23S rRNA. Functionally, the globular domain of the protein is located near the polypeptide exit tunnel on the outside of the subunit, while an extended beta-hairpin is found that lines the wall of the exit tunnel in the center of the 70S ribosome. In Capsella bursa-pastoris (Shepherd's purse), this protein is Large ribosomal subunit protein uL22c (rpl22).